A 388-amino-acid polypeptide reads, in one-letter code: Succinate--CoA ligase [ADP-forming] subunit beta (388 aa).

ATP-binding positions include Lys46, 53-55, Glu99, Cys102, and Glu107; that span reads GRG. Mg(2+) contacts are provided by Asn199 and Asp213. Substrate is bound by residues Asn264 and 321-323; that span reads GIV.

It belongs to the succinate/malate CoA ligase beta subunit family. As to quaternary structure, heterotetramer of two alpha and two beta subunits. Requires Mg(2+) as cofactor.

It catalyses the reaction succinate + ATP + CoA = succinyl-CoA + ADP + phosphate. It carries out the reaction GTP + succinate + CoA = succinyl-CoA + GDP + phosphate. It functions in the pathway carbohydrate metabolism; tricarboxylic acid cycle; succinate from succinyl-CoA (ligase route): step 1/1. Succinyl-CoA synthetase functions in the citric acid cycle (TCA), coupling the hydrolysis of succinyl-CoA to the synthesis of either ATP or GTP and thus represents the only step of substrate-level phosphorylation in the TCA. The beta subunit provides nucleotide specificity of the enzyme and binds the substrate succinate, while the binding sites for coenzyme A and phosphate are found in the alpha subunit. The polypeptide is Succinate--CoA ligase [ADP-forming] subunit beta (Actinobacillus pleuropneumoniae serotype 3 (strain JL03)).